The sequence spans 289 residues: Ribosomal RNA small subunit methyltransferase H (289 aa).

S-adenosyl-L-methionine-binding positions include G40 to H42, D60, F84, D106, and Q113.

The protein belongs to the methyltransferase superfamily. RsmH family.

It localises to the cytoplasm. It catalyses the reaction cytidine(1402) in 16S rRNA + S-adenosyl-L-methionine = N(4)-methylcytidine(1402) in 16S rRNA + S-adenosyl-L-homocysteine + H(+). In terms of biological role, specifically methylates the N4 position of cytidine in position 1402 (C1402) of 16S rRNA. The protein is Ribosomal RNA small subunit methyltransferase H of Haemophilus influenzae (strain PittGG).